The sequence spans 293 residues: Probable porphobilinogen deaminase (293 aa).

Cys-233 carries the S-(dipyrrolylmethanemethyl)cysteine modification.

Belongs to the HMBS family. It depends on dipyrromethane as a cofactor.

It carries out the reaction 4 porphobilinogen + H2O = hydroxymethylbilane + 4 NH4(+). The protein operates within porphyrin-containing compound metabolism; protoporphyrin-IX biosynthesis; coproporphyrinogen-III from 5-aminolevulinate: step 2/4. Its function is as follows. Tetrapolymerization of the monopyrrole PBG into the hydroxymethylbilane pre-uroporphyrinogen in several discrete steps. The protein is Probable porphobilinogen deaminase of Saccharolobus islandicus (strain L.S.2.15 / Lassen #1) (Sulfolobus islandicus).